The sequence spans 155 residues: Large-conductance mechanosensitive channel (155 aa).

The next 3 helical transmembrane spans lie at 16 to 36 (VVDMAVGIIIGGAFGAIVNNL), 40 to 60 (VILPPLGLLIGGVDFSSLYII), and 88 to 108 (GVFLNSVFSFVIMAFAVFLLV).

Belongs to the MscL family. As to quaternary structure, homopentamer.

The protein localises to the cell inner membrane. In terms of biological role, channel that opens in response to stretch forces in the membrane lipid bilayer. May participate in the regulation of osmotic pressure changes within the cell. This Chlorobium chlorochromatii (strain CaD3) protein is Large-conductance mechanosensitive channel.